Consider the following 286-residue polypeptide: Zinc finger protein ZAT5 (286 aa).

3 disordered regions span residues 1–28 (MMMGQDEVGSDQTQIIKGKRTKRQRSSS), 40–60 (STSSSAGGSGGERAVSDEYNS), and 131–171 (GGHR…FKVS). The C2H2-type 1 zinc-finger motif lies at 115-137 (YECKTCNRTFSSFQALGGHRASH). Residues 154-171 (QPKSSASEEGQNSHFKVS) show a composition bias toward polar residues. The segment at 190-212 (HECSICGSEFTSGQALGGHMRRH) adopts a C2H2-type 2 zinc-finger fold.

As to expression, expressed in flowers and siliques.

It localises to the nucleus. In terms of biological role, probable transcription factor that may be involved in stress responses. This Arabidopsis thaliana (Mouse-ear cress) protein is Zinc finger protein ZAT5 (ZAT5).